Reading from the N-terminus, the 366-residue chain is Phospho-N-acetylmuramoyl-pentapeptide-transferase (366 aa).

Transmembrane regions (helical) follow at residues 27 to 47, 71 to 91, 93 to 113, 134 to 154, 174 to 194, 205 to 225, 245 to 265, 268 to 288, 294 to 314, and 343 to 363; these read AAMF…IASL, TPTM…LLWA, LSNV…AIGF, LAIE…AAKI, ALLN…VSAG, GLAI…AYLA, LAVI…FNAP, AIFM…TVAV, IVMV…IIQV, and QVVI…LATL.

The protein belongs to the glycosyltransferase 4 family. MraY subfamily. The cofactor is Mg(2+).

It is found in the cell inner membrane. It carries out the reaction UDP-N-acetyl-alpha-D-muramoyl-L-alanyl-gamma-D-glutamyl-meso-2,6-diaminopimeloyl-D-alanyl-D-alanine + di-trans,octa-cis-undecaprenyl phosphate = di-trans,octa-cis-undecaprenyl diphospho-N-acetyl-alpha-D-muramoyl-L-alanyl-D-glutamyl-meso-2,6-diaminopimeloyl-D-alanyl-D-alanine + UMP. It participates in cell wall biogenesis; peptidoglycan biosynthesis. Catalyzes the initial step of the lipid cycle reactions in the biosynthesis of the cell wall peptidoglycan: transfers peptidoglycan precursor phospho-MurNAc-pentapeptide from UDP-MurNAc-pentapeptide onto the lipid carrier undecaprenyl phosphate, yielding undecaprenyl-pyrophosphoryl-MurNAc-pentapeptide, known as lipid I. This Allorhizobium ampelinum (strain ATCC BAA-846 / DSM 112012 / S4) (Agrobacterium vitis (strain S4)) protein is Phospho-N-acetylmuramoyl-pentapeptide-transferase.